We begin with the raw amino-acid sequence, 436 residues long: Flagellum-specific ATP synthase (436 aa).

An ATP-binding site is contributed by 165 to 172 (SGSGVGKS).

Belongs to the ATPase alpha/beta chains family.

It localises to the cytoplasm. It carries out the reaction ATP + H2O + 4 H(+)(in) = ADP + phosphate + 5 H(+)(out). In terms of biological role, probable catalytic subunit of a protein translocase for flagellum-specific export, or a proton translocase involved in local circuits at the flagellum. May be involved in a specialized protein export pathway that proceeds without signal peptide cleavage. This chain is Flagellum-specific ATP synthase (fliI), found in Borreliella burgdorferi (strain ATCC 35210 / DSM 4680 / CIP 102532 / B31) (Borrelia burgdorferi).